Reading from the N-terminus, the 334-residue chain is MTRILDNDLMGDEELIERTLRPQYLKEYIGQDKVKNQLSIFIEAAKLRDESLDHVLLFGPPGLGKTTMAFVIANELGVNLKQTSGPAIEKAGDLVAILNDLEPGDVLFIDEIHRMPMAVEEVLYSAMEDFYIDIMIGAGDTSRSVHLELPPFTLIGATTRAGMLSNPLRARFGITGHMEYYQVDDLTEIVERTSDIFEMAIVHEAALELAKRSRGTPRIANRLLKRVRDYAQIMGDGVITKEMTDKALEMLDVDHEGLDYVDQKILRTMIEMYNGGPVGLGTLSVNIAEERDTVEDMYEPYLIQKGFIMRTRTGRVATEKAYRHLKYPLDTKTE.

A large ATPase domain (RuvB-L) region spans residues 1–181; it reads MTRILDNDLM…FGITGHMEYY (181 aa). ATP-binding positions include Leu20, Arg21, Gly62, Lys65, Thr66, Thr67, 128–130, Arg171, Tyr181, and Arg218; that span reads EDF. Thr66 contacts Mg(2+). A small ATPAse domain (RuvB-S) region spans residues 182-252; sequence QVDDLTEIVE…MTDKALEMLD (71 aa). A head domain (RuvB-H) region spans residues 255–334; it reads HEGLDYVDQK…LKYPLDTKTE (80 aa). Positions 291, 310, 312, and 315 each coordinate DNA.

Belongs to the RuvB family. As to quaternary structure, homohexamer. Forms an RuvA(8)-RuvB(12)-Holliday junction (HJ) complex. HJ DNA is sandwiched between 2 RuvA tetramers; dsDNA enters through RuvA and exits via RuvB. An RuvB hexamer assembles on each DNA strand where it exits the tetramer. Each RuvB hexamer is contacted by two RuvA subunits (via domain III) on 2 adjacent RuvB subunits; this complex drives branch migration. In the full resolvosome a probable DNA-RuvA(4)-RuvB(12)-RuvC(2) complex forms which resolves the HJ.

It localises to the cytoplasm. It catalyses the reaction ATP + H2O = ADP + phosphate + H(+). Functionally, the RuvA-RuvB-RuvC complex processes Holliday junction (HJ) DNA during genetic recombination and DNA repair, while the RuvA-RuvB complex plays an important role in the rescue of blocked DNA replication forks via replication fork reversal (RFR). RuvA specifically binds to HJ cruciform DNA, conferring on it an open structure. The RuvB hexamer acts as an ATP-dependent pump, pulling dsDNA into and through the RuvAB complex. RuvB forms 2 homohexamers on either side of HJ DNA bound by 1 or 2 RuvA tetramers; 4 subunits per hexamer contact DNA at a time. Coordinated motions by a converter formed by DNA-disengaged RuvB subunits stimulates ATP hydrolysis and nucleotide exchange. Immobilization of the converter enables RuvB to convert the ATP-contained energy into a lever motion, pulling 2 nucleotides of DNA out of the RuvA tetramer per ATP hydrolyzed, thus driving DNA branch migration. The RuvB motors rotate together with the DNA substrate, which together with the progressing nucleotide cycle form the mechanistic basis for DNA recombination by continuous HJ branch migration. Branch migration allows RuvC to scan DNA until it finds its consensus sequence, where it cleaves and resolves cruciform DNA. This chain is Holliday junction branch migration complex subunit RuvB, found in Streptococcus uberis (strain ATCC BAA-854 / 0140J).